The primary structure comprises 234 residues: Phosphoribosylaminoimidazole-succinocarboxamide synthase (234 aa).

The protein belongs to the SAICAR synthetase family.

It carries out the reaction 5-amino-1-(5-phospho-D-ribosyl)imidazole-4-carboxylate + L-aspartate + ATP = (2S)-2-[5-amino-1-(5-phospho-beta-D-ribosyl)imidazole-4-carboxamido]succinate + ADP + phosphate + 2 H(+). It participates in purine metabolism; IMP biosynthesis via de novo pathway; 5-amino-1-(5-phospho-D-ribosyl)imidazole-4-carboxamide from 5-amino-1-(5-phospho-D-ribosyl)imidazole-4-carboxylate: step 1/2. This Streptococcus agalactiae serotype V (strain ATCC BAA-611 / 2603 V/R) protein is Phosphoribosylaminoimidazole-succinocarboxamide synthase.